Consider the following 562-residue polypeptide: uncharacterized protein (562 aa).

The next 5 membrane-spanning stretches (helical) occupy residues 10 to 27 (IYPE…YWVG), 34 to 53 (FSLG…GQFD), 63 to 85 (IFFL…QGIA), 92 to 114 (ALFA…KIAG), and 155 to 177 (FSVI…AIVL). RCK C-terminal domains follow at residues 204 to 288 (TENA…HPDS) and 290 to 377 (DETQ…QLGV). A run of 6 helical transmembrane segments spans residues 387–404 (VAFW…GSLV), 408–430 (GNLP…FSWV), 443–465 (PTVW…ISAG), 475–497 (LGFS…AALV), 504–526 (FHPA…LGMI), and 539–561 (YTIT…ILIL).

Belongs to the AAE transporter (TC 2.A.81) family.

It is found in the cell membrane. This is an uncharacterized protein from Shewanella oneidensis (strain ATCC 700550 / JCM 31522 / CIP 106686 / LMG 19005 / NCIMB 14063 / MR-1).